The primary structure comprises 120 residues: Holo-[acyl-carrier-protein] synthase (120 aa).

The Mg(2+) site is built by aspartate 8 and glutamate 58.

It belongs to the P-Pant transferase superfamily. AcpS family. It depends on Mg(2+) as a cofactor.

The protein localises to the cytoplasm. It catalyses the reaction apo-[ACP] + CoA = holo-[ACP] + adenosine 3',5'-bisphosphate + H(+). Its function is as follows. Transfers the 4'-phosphopantetheine moiety from coenzyme A to a Ser of acyl-carrier-protein. This chain is Holo-[acyl-carrier-protein] synthase, found in Anoxybacillus flavithermus (strain DSM 21510 / WK1).